A 120-amino-acid polypeptide reads, in one-letter code: Large ribosomal subunit protein bL17 (120 aa).

The protein belongs to the bacterial ribosomal protein bL17 family. As to quaternary structure, part of the 50S ribosomal subunit. Contacts protein L32.

The sequence is that of Large ribosomal subunit protein bL17 from Mesomycoplasma hyopneumoniae (strain 232) (Mycoplasma hyopneumoniae).